A 221-amino-acid chain; its full sequence is Vesicle transport v-SNARE 13 (221 aa).

The Cytoplasmic portion of the chain corresponds to Met-1–Trp-198. The stretch at Glu-32 to Ser-93 forms a coiled coil. The chain crosses the membrane as a helical; Anchor for type IV membrane protein span at residues Thr-199–Leu-219. The Vesicular segment spans residues Thr-220 to Arg-221.

It belongs to the VTI1 family. Forms SNARE complexes with t-SNAREs. Expressed at low levels in roots, stems, flowers and leaves.

Its subcellular location is the vacuole membrane. The protein resides in the prevacuolar compartment membrane. It localises to the endosome membrane. It is found in the early endosome membrane. In terms of biological role, may function as a v-SNARE responsible for targeting vesicles involved in the secretory pathway. Involved in actin-dependent endosomal trafficking pathways associated with the vacuole within root hairs and root tip epidermal cells. Essential for cell wall organization and polarized root hair growth. Also required for the localization of SYP41 to the trans-Golgi network in root hair cells. The sequence is that of Vesicle transport v-SNARE 13 from Arabidopsis thaliana (Mouse-ear cress).